The sequence spans 653 residues: Macrolide export ATP-binding/permease protein MacB (653 aa).

One can recognise an ABC transporter domain in the interval 6–244 (LQLTRVTRRF…DAASGASGDA (239 aa)). 42 to 49 (GASGSGKS) provides a ligand contact to ATP. The next 4 membrane-spanning stretches (helical) occupy residues 278-298 (LLTM…VAIG), 526-546 (LTLL…IGVM), 587-607 (MGGA…SLFV), and 616-636 (AGSI…FGFM).

Belongs to the ABC transporter superfamily. Macrolide exporter (TC 3.A.1.122) family. Homodimer.

It is found in the cell inner membrane. Non-canonical ABC transporter that contains transmembrane domains (TMD), which form a pore in the inner membrane, and an ATP-binding domain (NBD), which is responsible for energy generation. Confers resistance against macrolides. The protein is Macrolide export ATP-binding/permease protein MacB of Burkholderia thailandensis (strain ATCC 700388 / DSM 13276 / CCUG 48851 / CIP 106301 / E264).